Reading from the N-terminus, the 189-residue chain is Elongation factor P (189 aa).

It belongs to the elongation factor P family.

It localises to the cytoplasm. Its pathway is protein biosynthesis; polypeptide chain elongation. Functionally, involved in peptide bond synthesis. Stimulates efficient translation and peptide-bond synthesis on native or reconstituted 70S ribosomes in vitro. Probably functions indirectly by altering the affinity of the ribosome for aminoacyl-tRNA, thus increasing their reactivity as acceptors for peptidyl transferase. The sequence is that of Elongation factor P from Onion yellows phytoplasma (strain OY-M).